The primary structure comprises 114 residues: SOSS complex subunit C homolog (114 aa).

Residues methionine 1 to glutamate 10 show a composition bias toward polar residues. The disordered stretch occupies residues methionine 1 to histidine 61.

This sequence belongs to the SOSS-C family.

This Nematostella vectensis (Starlet sea anemone) protein is SOSS complex subunit C homolog.